A 343-amino-acid chain; its full sequence is Inositol 2-dehydrogenase 1 (343 aa).

This sequence belongs to the Gfo/Idh/MocA family. In terms of assembly, homotetramer.

It carries out the reaction myo-inositol + NAD(+) = scyllo-inosose + NADH + H(+). In terms of biological role, involved in the oxidation of myo-inositol (MI) to 2-keto-myo-inositol (2KMI or 2-inosose). The sequence is that of Inositol 2-dehydrogenase 1 from Mycolicibacterium vanbaalenii (strain DSM 7251 / JCM 13017 / BCRC 16820 / KCTC 9966 / NRRL B-24157 / PYR-1) (Mycobacterium vanbaalenii).